A 95-amino-acid polypeptide reads, in one-letter code: Co-chaperonin GroES (95 aa).

The protein belongs to the GroES chaperonin family. In terms of assembly, heptamer of 7 subunits arranged in a ring. Interacts with the chaperonin GroEL.

The protein resides in the cytoplasm. Its function is as follows. Together with the chaperonin GroEL, plays an essential role in assisting protein folding. The GroEL-GroES system forms a nano-cage that allows encapsulation of the non-native substrate proteins and provides a physical environment optimized to promote and accelerate protein folding. GroES binds to the apical surface of the GroEL ring, thereby capping the opening of the GroEL channel. The sequence is that of Co-chaperonin GroES from Xylella fastidiosa (strain M12).